The primary structure comprises 362 residues: 3-dehydroquinate synthase (362 aa).

Residues 72–77 (DGEAHK), 106–110 (GVIGD), 130–131 (TT), lysine 143, and lysine 152 contribute to the NAD(+) site. Zn(2+)-binding residues include glutamate 185, histidine 248, and histidine 265.

The protein belongs to the sugar phosphate cyclases superfamily. Dehydroquinate synthase family. It depends on Co(2+) as a cofactor. Zn(2+) serves as cofactor. NAD(+) is required as a cofactor.

The protein localises to the cytoplasm. It carries out the reaction 7-phospho-2-dehydro-3-deoxy-D-arabino-heptonate = 3-dehydroquinate + phosphate. The protein operates within metabolic intermediate biosynthesis; chorismate biosynthesis; chorismate from D-erythrose 4-phosphate and phosphoenolpyruvate: step 2/7. Functionally, catalyzes the conversion of 3-deoxy-D-arabino-heptulosonate 7-phosphate (DAHP) to dehydroquinate (DHQ). This Laribacter hongkongensis (strain HLHK9) protein is 3-dehydroquinate synthase.